The primary structure comprises 275 residues: NH(3)-dependent NAD(+) synthetase (275 aa).

46–53 (GISGGQDS) provides a ligand contact to ATP. A Mg(2+)-binding site is contributed by Asp-52. A deamido-NAD(+)-binding site is contributed by Arg-140. ATP is bound at residue Thr-160. Mg(2+) is bound at residue Glu-165. Deamido-NAD(+) is bound by residues Lys-173 and Asp-180. Residues Lys-189 and Thr-211 each coordinate ATP. 260–261 (HK) is a binding site for deamido-NAD(+).

It belongs to the NAD synthetase family. In terms of assembly, homodimer.

The catalysed reaction is deamido-NAD(+) + NH4(+) + ATP = AMP + diphosphate + NAD(+) + H(+). It functions in the pathway cofactor biosynthesis; NAD(+) biosynthesis; NAD(+) from deamido-NAD(+) (ammonia route): step 1/1. In terms of biological role, catalyzes the ATP-dependent amidation of deamido-NAD to form NAD. Uses ammonia as a nitrogen source. The polypeptide is NH(3)-dependent NAD(+) synthetase (Shigella flexneri serotype 5b (strain 8401)).